The chain runs to 277 residues: NH(3)-dependent NAD(+) synthetase (277 aa).

Position 46-53 (46-53 (GISGGQDS)) interacts with ATP. Position 52 (aspartate 52) interacts with Mg(2+). Arginine 142 is a deamido-NAD(+) binding site. Threonine 162 is a binding site for ATP. Residue glutamate 167 coordinates Mg(2+). Lysine 175 and aspartate 182 together coordinate deamido-NAD(+). The ATP site is built by lysine 191 and threonine 213. 263–264 (HK) is a deamido-NAD(+) binding site.

The protein belongs to the NAD synthetase family. As to quaternary structure, homodimer.

The catalysed reaction is deamido-NAD(+) + NH4(+) + ATP = AMP + diphosphate + NAD(+) + H(+). It functions in the pathway cofactor biosynthesis; NAD(+) biosynthesis; NAD(+) from deamido-NAD(+) (ammonia route): step 1/1. Functionally, catalyzes the ATP-dependent amidation of deamido-NAD to form NAD. Uses ammonia as a nitrogen source. In Corynebacterium glutamicum (strain R), this protein is NH(3)-dependent NAD(+) synthetase.